The chain runs to 600 residues: Elongation factor 4 (600 aa).

Positions 5-187 (KYIRNFSIVA…EIVEKVPAPE (183 aa)) constitute a tr-type G domain. Residues 17 to 22 (DHGKST) and 134 to 137 (NKVD) each bind GTP.

Belongs to the TRAFAC class translation factor GTPase superfamily. Classic translation factor GTPase family. LepA subfamily.

It localises to the cell membrane. The enzyme catalyses GTP + H2O = GDP + phosphate + H(+). Required for accurate and efficient protein synthesis under certain stress conditions. May act as a fidelity factor of the translation reaction, by catalyzing a one-codon backward translocation of tRNAs on improperly translocated ribosomes. Back-translocation proceeds from a post-translocation (POST) complex to a pre-translocation (PRE) complex, thus giving elongation factor G a second chance to translocate the tRNAs correctly. Binds to ribosomes in a GTP-dependent manner. This is Elongation factor 4 from Clostridium perfringens (strain ATCC 13124 / DSM 756 / JCM 1290 / NCIMB 6125 / NCTC 8237 / Type A).